We begin with the raw amino-acid sequence, 509 residues long: ATP synthase subunit alpha (509 aa).

169-176 provides a ligand contact to ATP; that stretch reads GDRQTGKT.

The protein belongs to the ATPase alpha/beta chains family. F-type ATPases have 2 components, CF(1) - the catalytic core - and CF(0) - the membrane proton channel. CF(1) has five subunits: alpha(3), beta(3), gamma(1), delta(1), epsilon(1). CF(0) has three main subunits: a(1), b(2) and c(9-12). The alpha and beta chains form an alternating ring which encloses part of the gamma chain. CF(1) is attached to CF(0) by a central stalk formed by the gamma and epsilon chains, while a peripheral stalk is formed by the delta and b chains.

It is found in the cell inner membrane. It catalyses the reaction ATP + H2O + 4 H(+)(in) = ADP + phosphate + 5 H(+)(out). Functionally, produces ATP from ADP in the presence of a proton gradient across the membrane. The alpha chain is a regulatory subunit. This is ATP synthase subunit alpha from Mesorhizobium japonicum (strain LMG 29417 / CECT 9101 / MAFF 303099) (Mesorhizobium loti (strain MAFF 303099)).